We begin with the raw amino-acid sequence, 348 residues long: MSDLGAVISLLLWGRQLFALYSGNDVTDISDDRFPKPPEIANGYVEHLFRYQCKNYYRLRTEGDGVYTLNDKKQWINKAVGDKLPECEAVCGKPKNPANPVQRILGGHLDAKGSFPWQAKMVSHHNLTTGATLINEQWLLTTAKNLFLNHSENATAKDIAPTLTLYVGKKQLVEIEKVVLHPNYHQVDIGLIKLKQKVLVNERVMPICLPSKNYAEVGRVGYVSGWGQSDNFKLTDHLKYVMLPVADQYDCITHYEGSTCPKWKAPKSPVGVQPILNEHTFCVGMSKYQEDTCYGDAGSAFAVHDLEEDTWYAAGILSFDKSCAVAEYGVYVKVTSIQHWVQKTIAEN.

A signal peptide (not cleaved) is located at residues 1–18 (MSDLGAVISLLLWGRQLF). Residues 34–87 (FPKPPEIANGYVEHLFRYQCKNYYRLRTEGDGVYTLNDKKQWINKAVGDKLPEC) form the Sushi domain. Residues 104–346 (ILGGHLDAKG…IQHWVQKTIA (243 aa)) form the Peptidase S1 domain. 2 disulfide bridges follow: Cys-251-Cys-282 and Cys-293-Cys-323.

It belongs to the peptidase S1 family. In adult liver the amount of HPR mRNA is at the lower limit of detection, therefore the extent of its expression is at most less than 1000-fold that of the HP1F gene. No HPR mRNA can be detected in fetal liver. Expressed in Hep-G2 and leukemia MOLT-4 cell lines.

The protein localises to the secreted. In terms of biological role, primate-specific plasma protein associated with apolipoprotein L-I (apoL-I)-containing high-density lipoprotein (HDL). This HDL particle, termed trypanosome lytic factor-1 (TLF-1), mediates human innate immune protection against many species of African trypanosomes. Binds hemoglobin with high affinity and may contribute to the clearance of cell-free hemoglobin to allow hepatic recycling of heme iron. The polypeptide is Haptoglobin-related protein (HPR) (Homo sapiens (Human)).